Here is a 284-residue protein sequence, read N- to C-terminus: Nucleotide-binding protein Sputcn32_0712 (284 aa).

Residue 8-15 (GRSGSGKS) coordinates ATP. Position 56-59 (56-59 (DVRN)) interacts with GTP.

The protein belongs to the RapZ-like family.

Displays ATPase and GTPase activities. In Shewanella putrefaciens (strain CN-32 / ATCC BAA-453), this protein is Nucleotide-binding protein Sputcn32_0712.